The following is a 125-amino-acid chain: Fluoride-specific ion channel FluC (125 aa).

2 helical membrane passes run 4–24 (LWVA…GVWI) and 34–54 (YGTF…LTVL). Residues Gly74 and Thr77 each contribute to the Na(+) site. Residues 99-119 (VLYFGSSLALGILAVWLGMVV) form a helical membrane-spanning segment.

Belongs to the fluoride channel Fluc/FEX (TC 1.A.43) family.

It localises to the cell inner membrane. It catalyses the reaction fluoride(in) = fluoride(out). Its activity is regulated as follows. Na(+) is not transported, but it plays an essential structural role and its presence is essential for fluoride channel function. Functionally, fluoride-specific ion channel. Important for reducing fluoride concentration in the cell, thus reducing its toxicity. The polypeptide is Fluoride-specific ion channel FluC (Acidobacterium capsulatum (strain ATCC 51196 / DSM 11244 / BCRC 80197 / JCM 7670 / NBRC 15755 / NCIMB 13165 / 161)).